We begin with the raw amino-acid sequence, 680 residues long: DNA ligase 1 (680 aa).

Residues 35-39 (DAEYD), 84-85 (SL), and aspartate 115 each bind NAD(+). Lysine 117 acts as the N6-AMP-lysine intermediate in catalysis. NAD(+)-binding residues include arginine 138, glutamate 175, lysine 295, and lysine 319. Residues cysteine 413, cysteine 416, cysteine 431, and cysteine 436 each contribute to the Zn(2+) site. One can recognise a BRCT domain in the interval 599-680 (REGSQLQGLK…FANLLKGLDR (82 aa)).

The protein belongs to the NAD-dependent DNA ligase family. LigA subfamily. Mg(2+) serves as cofactor. It depends on Mn(2+) as a cofactor.

The enzyme catalyses NAD(+) + (deoxyribonucleotide)n-3'-hydroxyl + 5'-phospho-(deoxyribonucleotide)m = (deoxyribonucleotide)n+m + AMP + beta-nicotinamide D-nucleotide.. Its function is as follows. DNA ligase that catalyzes the formation of phosphodiester linkages between 5'-phosphoryl and 3'-hydroxyl groups in double-stranded DNA using NAD as a coenzyme and as the energy source for the reaction. It is essential for DNA replication and repair of damaged DNA. The sequence is that of DNA ligase 1 from Nitratidesulfovibrio vulgaris (strain DP4) (Desulfovibrio vulgaris).